A 249-amino-acid chain; its full sequence is Tryptophan synthase alpha chain (249 aa).

Catalysis depends on proton acceptor residues glutamate 43 and aspartate 54.

This sequence belongs to the TrpA family. In terms of assembly, tetramer of two alpha and two beta chains.

It catalyses the reaction (1S,2R)-1-C-(indol-3-yl)glycerol 3-phosphate + L-serine = D-glyceraldehyde 3-phosphate + L-tryptophan + H2O. It functions in the pathway amino-acid biosynthesis; L-tryptophan biosynthesis; L-tryptophan from chorismate: step 5/5. In terms of biological role, the alpha subunit is responsible for the aldol cleavage of indoleglycerol phosphate to indole and glyceraldehyde 3-phosphate. The chain is Tryptophan synthase alpha chain from Campylobacter jejuni subsp. jejuni serotype O:6 (strain 81116 / NCTC 11828).